The following is a 54-amino-acid chain: Lectin alpha chain (54 aa).

It belongs to the leguminous lectin family. In terms of assembly, tetramer of two alpha and two beta chains.

In Lathyrus tingitanus (Tangier pea), this protein is Lectin alpha chain.